A 94-amino-acid polypeptide reads, in one-letter code: DNA-directed RNA polymerase subunit omega (94 aa).

The protein belongs to the RNA polymerase subunit omega family. As to quaternary structure, the RNAP catalytic core consists of 2 alpha, 1 beta, 1 beta' and 1 omega subunit. When a sigma factor is associated with the core the holoenzyme is formed, which can initiate transcription.

It carries out the reaction RNA(n) + a ribonucleoside 5'-triphosphate = RNA(n+1) + diphosphate. In terms of biological role, promotes RNA polymerase assembly. Latches the N- and C-terminal regions of the beta' subunit thereby facilitating its interaction with the beta and alpha subunits. The polypeptide is DNA-directed RNA polymerase subunit omega (Frankia casuarinae (strain DSM 45818 / CECT 9043 / HFP020203 / CcI3)).